Here is a 118-residue protein sequence, read N- to C-terminus: Small ribosomal subunit protein uS13 (118 aa).

Positions 94 to 118 (SLPLRGQRTKTNARTRKGPRKPIKK) are disordered.

This sequence belongs to the universal ribosomal protein uS13 family. Part of the 30S ribosomal subunit. Forms a loose heterodimer with protein S19. Forms two bridges to the 50S subunit in the 70S ribosome.

Functionally, located at the top of the head of the 30S subunit, it contacts several helices of the 16S rRNA. In the 70S ribosome it contacts the 23S rRNA (bridge B1a) and protein L5 of the 50S subunit (bridge B1b), connecting the 2 subunits; these bridges are implicated in subunit movement. Contacts the tRNAs in the A and P-sites. This Shewanella amazonensis (strain ATCC BAA-1098 / SB2B) protein is Small ribosomal subunit protein uS13.